The primary structure comprises 330 residues: Mas-related G-protein coupled receptor member X2 (330 aa).

Over 1–33 (MDPTTLVWGTESTTMNGNDQALPLLCGKETLIL) the chain is Extracellular. The chain crosses the membrane as a helical span at residues 34–54 (VVLILFIALVGLVGNAFVLWL). The Cytoplasmic portion of the chain corresponds to 55-63 (LGFRMRRNA). Residues 64–84 (FSVYVLSLAGADFLFLCFPMI) form a helical membrane-spanning segment. Topologically, residues 85–96 (NCLAYLINFFHS) are extracellular. The chain crosses the membrane as a helical span at residues 97 to 117 (ISINFPSFFTTVMTCAYLAGL). At 118 to 144 (SMLSAISTERCLSVLWPIWYRSRRPRH) the chain is on the cytoplasmic side. Residues 145-165 (LSAVMCVLLWALSLLLSILEG) form a helical membrane-spanning segment. Topologically, residues 166-184 (KFCGFLFSDGDSGWCQTFD) are extracellular. A helical membrane pass occupies residues 185–205 (FITAAWLMFLFVVLCGSSLAL). Topologically, residues 206–228 (LVRILCGSRGLPLTRLYLTILLT) are cytoplasmic. Residues 229–249 (VLIFLLCGLPFGIQWFLILWI) traverse the membrane as a helical segment. The Extracellular portion of the chain corresponds to 250–264 (WKNSDVLFCHIHPVS). Residues 265–285 (VVLSSFNSSANPIIYFFVGSF) traverse the membrane as a helical segment. Residues 286–330 (RKQWRLRQPVLKLALQRALQDTAEVDHSEGCFSQGTLEMSGSSLV) lie on the Cytoplasmic side of the membrane.

This sequence belongs to the G-protein coupled receptor 1 family. Mas subfamily.

The protein resides in the cell membrane. Its function is as follows. Mast cell-specific receptor for basic secretagogues, i.e. cationic amphiphilic drugs, as well as endo- or exogenous peptides, consisting of a basic head group and a hydrophobic core. Recognizes and binds small molecules containing a cyclized tetrahydroisoquinoline (THIQ), such as non-steroidal neuromuscular blocking drugs (NMBDs), including tubocurarine and atracurium. In response to these compounds, mediates pseudo-allergic reactions characterized by histamine release, inflammation and airway contraction. This chain is Mas-related G-protein coupled receptor member X2 (MRGPRX2), found in Trachypithecus francoisi (Francois' leaf monkey).